An 84-amino-acid chain; its full sequence is MSGGSTGERPFSDIITSIRYWVIHSITIPSLFVAGWLFVSTGLAYDVFGTPRPNEYFTQDRQQVPLVNDRFSAKQELEDLTKGI.

The helical transmembrane segment at 22–36 (VIHSITIPSLFVAGW) threads the bilayer. Position 24 (H24) interacts with heme.

The protein belongs to the PsbE/PsbF family. As to quaternary structure, heterodimer of an alpha subunit and a beta subunit. PSII is composed of 1 copy each of membrane proteins PsbA, PsbB, PsbC, PsbD, PsbE, PsbF, PsbH, PsbI, PsbJ, PsbK, PsbL, PsbM, PsbT, PsbX, PsbY, PsbZ, Psb30/Ycf12, at least 3 peripheral proteins of the oxygen-evolving complex and a large number of cofactors. It forms dimeric complexes. It depends on heme b as a cofactor.

The protein resides in the plastid. The protein localises to the chloroplast thylakoid membrane. Functionally, this b-type cytochrome is tightly associated with the reaction center of photosystem II (PSII). PSII is a light-driven water:plastoquinone oxidoreductase that uses light energy to abstract electrons from H(2)O, generating O(2) and a proton gradient subsequently used for ATP formation. It consists of a core antenna complex that captures photons, and an electron transfer chain that converts photonic excitation into a charge separation. The protein is Cytochrome b559 subunit alpha of Gracilaria tenuistipitata var. liui (Red alga).